Consider the following 99-residue polypeptide: Aspartyl/glutamyl-tRNA(Asn/Gln) amidotransferase subunit C (99 aa).

This sequence belongs to the GatC family. As to quaternary structure, heterotrimer of A, B and C subunits.

It catalyses the reaction L-glutamyl-tRNA(Gln) + L-glutamine + ATP + H2O = L-glutaminyl-tRNA(Gln) + L-glutamate + ADP + phosphate + H(+). The catalysed reaction is L-aspartyl-tRNA(Asn) + L-glutamine + ATP + H2O = L-asparaginyl-tRNA(Asn) + L-glutamate + ADP + phosphate + 2 H(+). Functionally, allows the formation of correctly charged Asn-tRNA(Asn) or Gln-tRNA(Gln) through the transamidation of misacylated Asp-tRNA(Asn) or Glu-tRNA(Gln) in organisms which lack either or both of asparaginyl-tRNA or glutaminyl-tRNA synthetases. The reaction takes place in the presence of glutamine and ATP through an activated phospho-Asp-tRNA(Asn) or phospho-Glu-tRNA(Gln). This Rhodococcus erythropolis (strain PR4 / NBRC 100887) protein is Aspartyl/glutamyl-tRNA(Asn/Gln) amidotransferase subunit C.